A 159-amino-acid chain; its full sequence is Eukaryotic translation initiation factor 5A-1 (159 aa).

Basic and acidic residues predominate over residues 1-12 (MSDEEHHFESKA). Positions 1 to 23 (MSDEEHHFESKADAGASKTYPQQ) are disordered. A Hypusine modification is found at lysine 52.

It belongs to the eIF-5A family. In terms of processing, lys-52 undergoes hypusination, a unique post-translational modification that consists in the addition of a butylamino group from spermidine to lysine side chain, leading to the formation of the unusual amino acid hypusine. eIF-5As are the only known proteins to undergo this modification, which is essential for their function.

Functionally, translation factor that promotes translation elongation and termination, particularly upon ribosome stalling at specific amino acid sequence contexts. Binds between the exit (E) and peptidyl (P) site of the ribosome and promotes rescue of stalled ribosome: specifically required for efficient translation of polyproline-containing peptides as well as other motifs that stall the ribosome. Acts as a ribosome quality control (RQC) cofactor by joining the RQC complex to facilitate peptidyl transfer during CAT tailing step. This Solanum lycopersicum (Tomato) protein is Eukaryotic translation initiation factor 5A-1.